We begin with the raw amino-acid sequence, 500 residues long: Probable cytosol aminopeptidase (500 aa).

K264 and D269 together coordinate Mn(2+). K276 is a catalytic residue. 3 residues coordinate Mn(2+): D287, D346, and E348. R350 is a catalytic residue.

This sequence belongs to the peptidase M17 family. Mn(2+) serves as cofactor.

The protein localises to the cytoplasm. It carries out the reaction Release of an N-terminal amino acid, Xaa-|-Yaa-, in which Xaa is preferably Leu, but may be other amino acids including Pro although not Arg or Lys, and Yaa may be Pro. Amino acid amides and methyl esters are also readily hydrolyzed, but rates on arylamides are exceedingly low.. The enzyme catalyses Release of an N-terminal amino acid, preferentially leucine, but not glutamic or aspartic acids.. Functionally, presumably involved in the processing and regular turnover of intracellular proteins. Catalyzes the removal of unsubstituted N-terminal amino acids from various peptides. This is Probable cytosol aminopeptidase from Chlamydia felis (strain Fe/C-56) (Chlamydophila felis).